The primary structure comprises 731 residues: Nucleolar GTP-binding protein 2 (731 aa).

Met1 bears the N-acetylmethionine mark. Positions 1-33 are disordered; sequence MVKPKYKGRSTINPSKASTNPDRVQGAGGQNMR. The span at 10-22 shows a compositional bias: polar residues; sequence STINPSKASTNPD. A CP-type G domain is found at 207–368; it reads WGELYKVIDS…LIDCPGVVYP (162 aa). GTP contacts are provided by residues 317-324 and 361-365; these read GYPNVGKS and DCPGV. The disordered stretch occupies residues 481 to 502; it reads VVPEAAQNNPGEEVTETAGEGS. Ser504 bears the Phosphoserine mark. Over residues 555–589 the composition is skewed to acidic residues; that stretch reads LEEELESFSDEEEEEQEQQRDDAEESSSEPEEENV. Disordered regions lie at residues 555 to 594 and 630 to 731; these read LEEE…NDTK and EKIF…RQKQ. Basic and acidic residues-rich tracts occupy residues 630–652 and 662–671; these read EKIF…DRAP and QREEEQEHSN. Composition is skewed to basic residues over residues 681–695 and 721–731; these read ERRR…KKVG and KHKRKKFRQKQ.

Belongs to the TRAFAC class YlqF/YawG GTPase family. NOG2 subfamily. Interacts with LYAR and RPL23A. Interacts with the nuclear importin-beta receptor and, at a lower extent, with importin-alpha. As to expression, widely expressed, with the highest expression level in testis.

It localises to the nucleus. It is found in the nucleolus. In terms of biological role, GTPase that associates with pre-60S ribosomal subunits in the nucleolus and is required for their nuclear export and maturation. May promote cell proliferation possibly by increasing p53/TP53 protein levels, and consequently those of its downstream product CDKN1A/p21, and decreasing RPL23A protein levels. The polypeptide is Nucleolar GTP-binding protein 2 (GNL2) (Homo sapiens (Human)).